A 736-amino-acid polypeptide reads, in one-letter code: Subtilisin-like protease SBT1.9 (736 aa).

A signal peptide spans 1–20 (MGMTVVIILVFSFFVAIVTA). The propeptide at 21–101 (ETSPYIIHMD…FTKDLPVKLH (81 aa)) is activation peptide. One can recognise an Inhibitor I9 domain in the interval 25–101 (YIIHMDLSAK…FTKDLPVKLH (77 aa)). Residues 103 to 582 (TFSPKFIGLN…AGHVSTNKVL (480 aa)) form the Peptidase S8 domain. A glycan (N-linked (GlcNAc...) asparagine) is linked at asparagine 112. Aspartate 133 acts as the Charge relay system in catalysis. Residue asparagine 162 is glycosylated (N-linked (GlcNAc...) asparagine). The Charge relay system role is filled by histidine 205. 3 N-linked (GlcNAc...) asparagine glycosylation sites follow: asparagine 220, asparagine 381, and asparagine 453. A PA domain is found at 367–441 (VQFPVTYIES…VAFIGSKHRE (75 aa)). Serine 529 serves as the catalytic Charge relay system. The N-linked (GlcNAc...) asparagine glycan is linked to asparagine 617.

It belongs to the peptidase S8 family.

Its subcellular location is the secreted. The protein is Subtilisin-like protease SBT1.9 of Arabidopsis thaliana (Mouse-ear cress).